We begin with the raw amino-acid sequence, 206 residues long: Small ribosomal subunit protein uS4 (206 aa).

The S4 RNA-binding domain maps to 96–156; sequence GRLDNVVYRM…EKSKKQSRIK (61 aa).

The protein belongs to the universal ribosomal protein uS4 family. Part of the 30S ribosomal subunit. Contacts protein S5. The interaction surface between S4 and S5 is involved in control of translational fidelity.

One of the primary rRNA binding proteins, it binds directly to 16S rRNA where it nucleates assembly of the body of the 30S subunit. Functionally, with S5 and S12 plays an important role in translational accuracy. The protein is Small ribosomal subunit protein uS4 of Photorhabdus laumondii subsp. laumondii (strain DSM 15139 / CIP 105565 / TT01) (Photorhabdus luminescens subsp. laumondii).